Reading from the N-terminus, the 120-residue chain is NAD(P)H-quinone oxidoreductase subunit 3 (120 aa).

3 helical membrane-spanning segments follow: residues 2–22 (FVLS…LVPI), 64–84 (MFAL…PWAV), and 89–109 (LGLL…IALV).

This sequence belongs to the complex I subunit 3 family. As to quaternary structure, NDH-1 can be composed of about 15 different subunits; different subcomplexes with different compositions have been identified which probably have different functions.

Its subcellular location is the cellular thylakoid membrane. It catalyses the reaction a plastoquinone + NADH + (n+1) H(+)(in) = a plastoquinol + NAD(+) + n H(+)(out). The enzyme catalyses a plastoquinone + NADPH + (n+1) H(+)(in) = a plastoquinol + NADP(+) + n H(+)(out). Functionally, NDH-1 shuttles electrons from an unknown electron donor, via FMN and iron-sulfur (Fe-S) centers, to quinones in the respiratory and/or the photosynthetic chain. The immediate electron acceptor for the enzyme in this species is believed to be plastoquinone. Couples the redox reaction to proton translocation, and thus conserves the redox energy in a proton gradient. Cyanobacterial NDH-1 also plays a role in inorganic carbon-concentration. This Picosynechococcus sp. (strain ATCC 27264 / PCC 7002 / PR-6) (Agmenellum quadruplicatum) protein is NAD(P)H-quinone oxidoreductase subunit 3.